We begin with the raw amino-acid sequence, 339 residues long: Glycerol-3-phosphate dehydrogenase [NAD(P)+] (339 aa).

Serine 15, tyrosine 16, histidine 36, and lysine 110 together coordinate NADPH. Positions 110, 139, and 141 each coordinate sn-glycerol 3-phosphate. Alanine 143 serves as a coordination point for NADPH. The sn-glycerol 3-phosphate site is built by lysine 195, aspartate 248, serine 258, arginine 259, and asparagine 260. Residue lysine 195 is the Proton acceptor of the active site. Residue arginine 259 coordinates NADPH. NADPH is bound by residues valine 283 and glutamate 285.

It belongs to the NAD-dependent glycerol-3-phosphate dehydrogenase family.

It is found in the cytoplasm. The catalysed reaction is sn-glycerol 3-phosphate + NAD(+) = dihydroxyacetone phosphate + NADH + H(+). It catalyses the reaction sn-glycerol 3-phosphate + NADP(+) = dihydroxyacetone phosphate + NADPH + H(+). Its pathway is membrane lipid metabolism; glycerophospholipid metabolism. Catalyzes the reduction of the glycolytic intermediate dihydroxyacetone phosphate (DHAP) to sn-glycerol 3-phosphate (G3P), the key precursor for phospholipid synthesis. In Pectobacterium atrosepticum (strain SCRI 1043 / ATCC BAA-672) (Erwinia carotovora subsp. atroseptica), this protein is Glycerol-3-phosphate dehydrogenase [NAD(P)+].